A 97-amino-acid polypeptide reads, in one-letter code: Citrate lyase acyl carrier protein (97 aa).

An O-(phosphoribosyl dephospho-coenzyme A)serine modification is found at Ser-14.

This sequence belongs to the CitD family. Oligomer with a subunit composition of (alpha,beta,gamma)6.

Its subcellular location is the cytoplasm. Functionally, covalent carrier of the coenzyme of citrate lyase. The polypeptide is Citrate lyase acyl carrier protein (Cronobacter sakazakii (strain ATCC BAA-894) (Enterobacter sakazakii)).